The sequence spans 166 residues: MSGKIGLYTGSFDPVTNGHMDMIKRASHLFEHVYVGIFNNPNKQGFFTFELRAQMLREAVCALPNVTVVSAEHGLAVDLARELSVTHLIRGLRNTADFDYEAGLEYFNHRLAPEIETIYLMATHDLQPISSSRIRELIAFRAPITGLVPQAVINQVEKMNENNKKI.

S11 is a substrate binding site. Residues 11–12 (SF) and H19 each bind ATP. Substrate is bound by residues K43, A76, and R90. Residues 91-93 (GLR), E101, and 126-132 (LQPISSS) contribute to the ATP site.

The protein belongs to the bacterial CoaD family. In terms of assembly, homohexamer. The cofactor is Mg(2+).

The protein resides in the cytoplasm. It catalyses the reaction (R)-4'-phosphopantetheine + ATP + H(+) = 3'-dephospho-CoA + diphosphate. Its pathway is cofactor biosynthesis; coenzyme A biosynthesis; CoA from (R)-pantothenate: step 4/5. In terms of biological role, reversibly transfers an adenylyl group from ATP to 4'-phosphopantetheine, yielding dephospho-CoA (dPCoA) and pyrophosphate. This Streptococcus equi subsp. zooepidemicus (strain H70) protein is Phosphopantetheine adenylyltransferase.